A 567-amino-acid polypeptide reads, in one-letter code: PEX5-related protein (567 aa).

The segment at Ser-56–Ser-105 is disordered. Ser-146 carries the phosphoserine modification. The disordered stretch occupies residues Leu-150 to Asn-169. Phosphoserine is present on residues Ser-194, Ser-198, and Ser-202. TPR repeat units follow at residues Trp-267–Asp-300, Ala-301–Asn-334, and Lys-336–Tyr-368. Phosphoserine is present on residues Ser-386 and Ser-388. TPR repeat units lie at residues Pro-415–Asp-448, Ser-450–Phe-482, and Arg-484–Ser-516.

The protein belongs to the peroxisomal targeting signal receptor family. In terms of assembly, interacts with RAB8B. Forms an obligate 4:4 complex with HCN2. Interacts with HCN3. Interacts with HCN4 with a 4:4 HCN4:PEX5L stoichiometry; reduces the effects of cAMP on the voltage-dependence and rate of activation of HCN4.

The protein resides in the cytoplasm. It localises to the membrane. Functionally, accessory subunit of hyperpolarization-activated cyclic nucleotide-gated (HCN) channels, regulating their cell-surface expression and cyclic nucleotide dependence. The sequence is that of PEX5-related protein (Pex5l) from Mus musculus (Mouse).